The primary structure comprises 259 residues: 4-hydroxy-tetrahydrodipicolinate reductase (259 aa).

NAD(+)-binding positions include 9 to 14 (GAGGRM) and Glu-35. An NADP(+)-binding site is contributed by Arg-36. Residues 92–94 (GTT) and 116–119 (APNM) each bind NAD(+). The Proton donor/acceptor role is filled by His-149. His-150 lines the (S)-2,3,4,5-tetrahydrodipicolinate pocket. Residue Lys-153 is the Proton donor of the active site. 159–160 (GT) is a binding site for (S)-2,3,4,5-tetrahydrodipicolinate.

It belongs to the DapB family.

Its subcellular location is the cytoplasm. The catalysed reaction is (S)-2,3,4,5-tetrahydrodipicolinate + NAD(+) + H2O = (2S,4S)-4-hydroxy-2,3,4,5-tetrahydrodipicolinate + NADH + H(+). The enzyme catalyses (S)-2,3,4,5-tetrahydrodipicolinate + NADP(+) + H2O = (2S,4S)-4-hydroxy-2,3,4,5-tetrahydrodipicolinate + NADPH + H(+). It participates in amino-acid biosynthesis; L-lysine biosynthesis via DAP pathway; (S)-tetrahydrodipicolinate from L-aspartate: step 4/4. Functionally, catalyzes the conversion of 4-hydroxy-tetrahydrodipicolinate (HTPA) to tetrahydrodipicolinate. In Nitratidesulfovibrio vulgaris (strain DSM 19637 / Miyazaki F) (Desulfovibrio vulgaris), this protein is 4-hydroxy-tetrahydrodipicolinate reductase.